Reading from the N-terminus, the 284-residue chain is NAD kinase (284 aa).

The active-site Proton acceptor is the D70. NAD(+)-binding positions include 70–71 (DG), 139–140 (NE), K167, D169, L177, 180–185 (TAYNLS), and Q236.

Belongs to the NAD kinase family. It depends on a divalent metal cation as a cofactor.

It is found in the cytoplasm. It carries out the reaction NAD(+) + ATP = ADP + NADP(+) + H(+). Its function is as follows. Involved in the regulation of the intracellular balance of NAD and NADP, and is a key enzyme in the biosynthesis of NADP. Catalyzes specifically the phosphorylation on 2'-hydroxyl of the adenosine moiety of NAD to yield NADP. In Helicobacter pylori (strain J99 / ATCC 700824) (Campylobacter pylori J99), this protein is NAD kinase.